The primary structure comprises 238 residues: MRPSGRQPDQLRPVTLTRKFTRHAEGSVLVCFGDTQVLCTASVLPKVPPHKKGSGEGWVTAEYGMLPRSTHTRSDREAARGKQSGRTQEIQRLIGRAMRTVFDLRALGEHTLHLDCDVLQADGGTRTASITGAFVAAYDAVSVMREKGQLVGDPVRDFVAAVSVGVVDGVPVLDLDYPEDSACDTDMNVVMTGSGGFVEVQGTAEGTPFSRAEMDAMLGLADQGIRTLISLQKQALGL.

The tract at residues Leu-66–Gln-88 is disordered. Residues Arg-86 and Gly-124–Arg-126 contribute to the phosphate site.

It belongs to the RNase PH family. As to quaternary structure, homohexameric ring arranged as a trimer of dimers.

The enzyme catalyses tRNA(n+1) + phosphate = tRNA(n) + a ribonucleoside 5'-diphosphate. Functionally, phosphorolytic 3'-5' exoribonuclease that plays an important role in tRNA 3'-end maturation. Removes nucleotide residues following the 3'-CCA terminus of tRNAs; can also add nucleotides to the ends of RNA molecules by using nucleoside diphosphates as substrates, but this may not be physiologically important. Probably plays a role in initiation of 16S rRNA degradation (leading to ribosome degradation) during starvation. The sequence is that of Ribonuclease PH from Ralstonia pickettii (strain 12J).